A 284-amino-acid polypeptide reads, in one-letter code: P2R1A-PPP2R2A-interacting phosphatase regulator 1 (284 aa).

Residues 1–65 (MAQEKMELDL…RRNSTTFPSR (65 aa)) form a disordered region. Positions 20–29 (EGGGPGGGGL) are enriched in gly residues. Ser-32 bears the Phosphoserine mark. Ser-34 carries the post-translational modification Phosphoserine; by CHEK1. Phosphoserine occurs at positions 42, 45, 59, and 73. A Glycyl lysine isopeptide (Lys-Gly) (interchain with G-Cter in SUMO1) cross-link involves residue Lys-86. Residues Ser-140 and Ser-144 each carry the phosphoserine modification. Thr-146 bears the Phosphothreonine mark. Positions 164-185 (SNGLPPSPIPSPTTRFTTRRSQ) are disordered. Over residues 175–185 (PTTRFTTRRSQ) the composition is skewed to low complexity. 2 positions are modified to phosphoserine: Ser-184 and Ser-186. Residues 233-284 (GVCVSSDTLDGNSSSAGSSCNSPAKVSTTTDSPVSPAQAASPFIPVDELSSK) form a disordered region. A compositionally biased stretch (low complexity) spans 243-254 (GNSSSAGSSCNS). Polar residues predominate over residues 256–267 (AKVSTTTDSPVS). Residues Ser-264, Ser-267, and Ser-273 each carry the phosphoserine modification.

It belongs to the FAM122 family. In terms of assembly, interacts with PPP2CA and PPP2R1A. Interacts (via its N-terminus) with PPP2R2A; the interaction is direct and this interaction inhibits PP2A activity. The CHEK1-mediated Ser-34 phosphorylated form interacts with 14-3-3 proteins. Post-translationally, CHEK1-mediated phosphorylation at Ser-34 negatively regulates its ability to inhibit serine/threonine-protein phosphatase 2A (PP2A) activity. Phosphorylation leads to its release from the PP2A complex and its sequestration by 14-3-3 proteins in the cytoplasm resulting in its inability to translocate to the nucleus, where it otherwise inhibits PP2A.

It is found in the nucleus. Its subcellular location is the cytoplasm. Acts as an inhibitor of serine/threonine-protein phosphatase 2A (PP2A) activity. Inhibits PP2A activity by blocking the substrate binding site on PPP2R2A and the active site of PPP2CA. Potentiates ubiquitin-mediated proteasomal degradation of serine/threonine-protein phosphatase 2A catalytic subunit alpha (PPP2CA). Inhibits PP2A-mediated dephosphorylation of WEE1, promoting ubiquitin-mediated proteolysis of WEE1, thereby releasing G2/M checkpoint. This Mus musculus (Mouse) protein is P2R1A-PPP2R2A-interacting phosphatase regulator 1.